The sequence spans 129 residues: Cytochrome c oxidase subunit 5B, mitochondrial (129 aa).

The N-terminal 31 residues, 1-31 (MASRLLRGVGALASQALRARGPNGVSVVRSM), are a transit peptide targeting the mitochondrion. Residues lysine 68 and lysine 86 each carry the N6-acetyllysine modification. Zn(2+)-binding residues include cysteine 91, cysteine 93, cysteine 113, and cysteine 116. Lysine 121 carries the post-translational modification N6-acetyllysine.

The protein belongs to the cytochrome c oxidase subunit 5B family. Component of the cytochrome c oxidase (complex IV, CIV), a multisubunit enzyme composed of 14 subunits. The complex is composed of a catalytic core of 3 subunits MT-CO1, MT-CO2 and MT-CO3, encoded in the mitochondrial DNA, and 11 supernumerary subunits COX4I1 (or COX4I2), COX5A, COX5B, COX6A2 (or COX6A1), COX6B1 (or COX6B2), COX6C, COX7A1 (or COX7A2), COX7B, COX7C, COX8B and NDUFA4, which are encoded in the nuclear genome. The complex exists as a monomer or a dimer and forms supercomplexes (SCs) in the inner mitochondrial membrane with NADH-ubiquinone oxidoreductase (complex I, CI) and ubiquinol-cytochrome c oxidoreductase (cytochrome b-c1 complex, complex III, CIII), resulting in different assemblies (supercomplex SCI(1)III(2)IV(1) and megacomplex MCI(2)III(2)IV(2)).

The protein resides in the mitochondrion inner membrane. It functions in the pathway energy metabolism; oxidative phosphorylation. In terms of biological role, component of the cytochrome c oxidase, the last enzyme in the mitochondrial electron transport chain which drives oxidative phosphorylation. The respiratory chain contains 3 multisubunit complexes succinate dehydrogenase (complex II, CII), ubiquinol-cytochrome c oxidoreductase (cytochrome b-c1 complex, complex III, CIII) and cytochrome c oxidase (complex IV, CIV), that cooperate to transfer electrons derived from NADH and succinate to molecular oxygen, creating an electrochemical gradient over the inner membrane that drives transmembrane transport and the ATP synthase. Cytochrome c oxidase is the component of the respiratory chain that catalyzes the reduction of oxygen to water. Electrons originating from reduced cytochrome c in the intermembrane space (IMS) are transferred via the dinuclear copper A center (CU(A)) of subunit 2 and heme A of subunit 1 to the active site in subunit 1, a binuclear center (BNC) formed by heme A3 and copper B (CU(B)). The BNC reduces molecular oxygen to 2 water molecules using 4 electrons from cytochrome c in the IMS and 4 protons from the mitochondrial matrix. The chain is Cytochrome c oxidase subunit 5B, mitochondrial (COX5B) from Bos taurus (Bovine).